The chain runs to 332 residues: HPr kinase/phosphorylase (332 aa).

Catalysis depends on residues His-153 and Lys-174. 168–175 (GKSGLGKS) is an ATP binding site. Position 175 (Ser-175) interacts with Mg(2+). Asp-192 (proton acceptor; for phosphorylation activity. Proton donor; for dephosphorylation activity) is an active-site residue. Residues 217 to 226 (MEIRGLGVVD) form an important for the catalytic mechanism of both phosphorylation and dephosphorylation region. Residue Glu-218 participates in Mg(2+) binding. The active site involves Arg-259. The segment at 280–285 (PIFPGK) is important for the catalytic mechanism of dephosphorylation.

The protein belongs to the HPrK/P family. Homohexamer. It depends on Mg(2+) as a cofactor.

The enzyme catalyses [HPr protein]-L-serine + ATP = [HPr protein]-O-phospho-L-serine + ADP + H(+). The catalysed reaction is [HPr protein]-O-phospho-L-serine + phosphate + H(+) = [HPr protein]-L-serine + diphosphate. Functionally, catalyzes the ATP- as well as the pyrophosphate-dependent phosphorylation of a specific serine residue in HPr, a phosphocarrier protein of the phosphoenolpyruvate-dependent sugar phosphotransferase system (PTS). HprK/P also catalyzes the pyrophosphate-producing, inorganic phosphate-dependent dephosphorylation (phosphorolysis) of seryl-phosphorylated HPr (P-Ser-HPr). The chain is HPr kinase/phosphorylase from Chlorobium luteolum (strain DSM 273 / BCRC 81028 / 2530) (Pelodictyon luteolum).